A 194-amino-acid polypeptide reads, in one-letter code: Molybdenum cofactor guanylyltransferase (194 aa).

Residues 12–14 (LAG), lysine 25, asparagine 53, aspartate 71, and aspartate 101 contribute to the GTP site. Aspartate 101 is a binding site for Mg(2+).

It belongs to the MobA family. As to quaternary structure, monomer. The cofactor is Mg(2+).

The protein localises to the cytoplasm. The enzyme catalyses Mo-molybdopterin + GTP + H(+) = Mo-molybdopterin guanine dinucleotide + diphosphate. In terms of biological role, transfers a GMP moiety from GTP to Mo-molybdopterin (Mo-MPT) cofactor (Moco or molybdenum cofactor) to form Mo-molybdopterin guanine dinucleotide (Mo-MGD) cofactor. This Escherichia coli O157:H7 protein is Molybdenum cofactor guanylyltransferase.